The following is a 100-amino-acid chain: NADH-quinone oxidoreductase subunit K (100 aa).

A run of 3 helical transmembrane segments spans residues 4–24, 28–48, and 60–80; these read LQHG…CLVL, LLFM…AFVV, and IMYI…LALL.

It belongs to the complex I subunit 4L family. NDH-1 is composed of 13 different subunits. Subunits NuoA, H, J, K, L, M, N constitute the membrane sector of the complex.

It localises to the cell inner membrane. The catalysed reaction is a quinone + NADH + 5 H(+)(in) = a quinol + NAD(+) + 4 H(+)(out). Functionally, NDH-1 shuttles electrons from NADH, via FMN and iron-sulfur (Fe-S) centers, to quinones in the respiratory chain. The immediate electron acceptor for the enzyme in this species is believed to be ubiquinone. Couples the redox reaction to proton translocation (for every two electrons transferred, four hydrogen ions are translocated across the cytoplasmic membrane), and thus conserves the redox energy in a proton gradient. The protein is NADH-quinone oxidoreductase subunit K of Proteus mirabilis (strain HI4320).